A 152-amino-acid chain; its full sequence is Large ribosomal subunit protein bL9 (152 aa).

The protein belongs to the bacterial ribosomal protein bL9 family.

Binds to the 23S rRNA. The protein is Large ribosomal subunit protein bL9 of Mycoplasmopsis synoviae (strain 53) (Mycoplasma synoviae).